The chain runs to 522 residues: Maturase K (522 aa).

It belongs to the intron maturase 2 family. MatK subfamily.

The protein resides in the plastid. Its subcellular location is the chloroplast. Functionally, usually encoded in the trnK tRNA gene intron. Probably assists in splicing its own and other chloroplast group II introns. This is Maturase K from Aristea glauca.